A 98-amino-acid polypeptide reads, in one-letter code: Large ribosomal subunit protein uL23 (98 aa).

Belongs to the universal ribosomal protein uL23 family. Part of the 50S ribosomal subunit. Contacts protein L29, and trigger factor when it is bound to the ribosome.

One of the early assembly proteins it binds 23S rRNA. One of the proteins that surrounds the polypeptide exit tunnel on the outside of the ribosome. Forms the main docking site for trigger factor binding to the ribosome. The polypeptide is Large ribosomal subunit protein uL23 (Borreliella afzelii (strain PKo) (Borrelia afzelii)).